The primary structure comprises 216 residues: Adenylate kinase (216 aa).

11–16 is an ATP binding site; the sequence is GSGKGT. An NMP region spans residues 31–60; that stretch reads ATGDLFRKAIECGDELGDTVKSYMERGELV. AMP contacts are provided by residues threonine 32, arginine 37, 58–60, 86–89, and glutamine 93; these read ELV and GFPR. Residues 127–163 form an LID region; that stretch reads GRWVCRSCQSPYQSGCAEVTKGKCSRCQGELYQRPDD. Arginine 128 contacts ATP. Zn(2+) contacts are provided by cysteine 131, cysteine 134, cysteine 150, and cysteine 153. Positions 160 and 171 each coordinate AMP. An ATP-binding site is contributed by alanine 199.

The protein belongs to the adenylate kinase family. Monomer.

Its subcellular location is the cytoplasm. The enzyme catalyses AMP + ATP = 2 ADP. It functions in the pathway purine metabolism; AMP biosynthesis via salvage pathway; AMP from ADP: step 1/1. Its function is as follows. Catalyzes the reversible transfer of the terminal phosphate group between ATP and AMP. Plays an important role in cellular energy homeostasis and in adenine nucleotide metabolism. This chain is Adenylate kinase, found in Dehalococcoides mccartyi (strain ATCC BAA-2100 / JCM 16839 / KCTC 5957 / BAV1).